We begin with the raw amino-acid sequence, 459 residues long: Probable rhamnogalacturonase C (459 aa).

A signal peptide spans 1 to 18; that stretch reads MRASILPLTLFLATLAGA. Asn36, Asn64, Asn77, Asn140, and Asn155 each carry an N-linked (GlcNAc...) asparagine glycan. Cysteines 39 and 65 form a disulfide. The active-site Proton donor is the Asp216. A disulfide bridge connects residues Cys218 and Cys235. 2 N-linked (GlcNAc...) asparagine glycosylation sites follow: Asn236 and Asn251. His290 is a catalytic residue. A glycan (N-linked (GlcNAc...) asparagine) is linked at Asn315. A disulfide bond links Cys337 and Cys343. The N-linked (GlcNAc...) asparagine glycan is linked to Asn356. An intrachain disulfide couples Cys365 to Cys374.

The protein belongs to the glycosyl hydrolase 28 family.

It is found in the secreted. Functionally, pectinolytic enzymes consist of four classes of enzymes: pectine lyase, polygalacturonase, pectin methylesterase and rhamnogalacturonase. Hydrolyzes alpha-D-galacturonopyranosyl-(1,2)-alpha-L-rhamnopyranosyl linkages in the backbone of the hairy regions of pectins. The sequence is that of Probable rhamnogalacturonase C (rhgC) from Aspergillus niger (strain ATCC MYA-4892 / CBS 513.88 / FGSC A1513).